The primary structure comprises 391 residues: S-adenosylmethionine synthase (391 aa).

Histidine 14 contacts ATP. Mg(2+) is bound at residue aspartate 16. Residue glutamate 42 participates in K(+) binding. Positions 55 and 98 each coordinate L-methionine. The flexible loop stretch occupies residues 98 to 108 (QSVDIAMGVDE). ATP-binding positions include 172–174 (DGK), 238–239 (RF), aspartate 247, 253–254 (RK), alanine 270, and lysine 274. Aspartate 247 contacts L-methionine. Lysine 278 contributes to the L-methionine binding site.

The protein belongs to the AdoMet synthase family. In terms of assembly, homotetramer; dimer of dimers. Mg(2+) serves as cofactor. K(+) is required as a cofactor.

Its subcellular location is the cytoplasm. It carries out the reaction L-methionine + ATP + H2O = S-adenosyl-L-methionine + phosphate + diphosphate. The protein operates within amino-acid biosynthesis; S-adenosyl-L-methionine biosynthesis; S-adenosyl-L-methionine from L-methionine: step 1/1. Catalyzes the formation of S-adenosylmethionine (AdoMet) from methionine and ATP. The overall synthetic reaction is composed of two sequential steps, AdoMet formation and the subsequent tripolyphosphate hydrolysis which occurs prior to release of AdoMet from the enzyme. This chain is S-adenosylmethionine synthase, found in Clostridium botulinum (strain Kyoto / Type A2).